A 1048-amino-acid chain; its full sequence is MKIFLLCIFLILCGTSVWAKDKHYYIGIIETAWNYASDHAEKKLISVDTEHSNIYLQNGPNRIGSVYKKAVYLQYTDENFRTVIEKPVWLGFLGPIIKAETGDKVYVHLKNFASRPYTFHAHGLTYYKEHEGAIYPDNTTDLQKADDKVQPGEQCLYILHANPEQGPGEEDSNCVTRIYHSHIDAPKDIASGLIGPLIHCKKDSLDEEKEKNIDKEFVVMFSVVDENLSWYLEENIKTYCSEPEKVEQDNEDFQESNRMYSVNGYAFGSLPGLSMCAEDRVKWYLFGMGNEIDVHAAFFHGQVLTSKNYRVDTINLFPATLFDAFMVAQNPGQWMLSCQNLNHLKAGLQAFFWVQDCKKSSSEDNIHGKNVRHYYIAAEEVIWNYAPSGIDAFTKENLRAPGSASEAFFEQGPTRIGGSYKKLVYREYTDASFSNQKERGPEEEHLGILGPVIAAEVGDTIRVTFHNKAAHPLSIEPIGVRVDKNNEGTYYSPTGSGPPPSGSHVAPKGTFTYEWTVPKEVGPTYKDPVCLAKMYYSGSTKDIFTGLIGPMKICRNGSLLANGRLKNVDKEFYLFPTVFDENESLLLDDNIKMFTTAPDQVDKENEDFQESNKMHSMNGFMYGNQPGLSMCQGDSVMWYLFSAGNEVDIHGIYFSGNTYLSRGERRDTANLFPQTSLSLFMQPDTAGTFDVECLTTDHYTGGMKQKYTVSQCGQRSEDLYLYLGERTYYIAAVEVEWDYSPSRKWEKELHHLQEQNLSNAFLDKEEFYIGSKYKKVVYRQFTDSTFQVPVERKGEEEHLGILGPQLHADVGDKVNIIFKNMATRPYSIHAHGVKTESSTVTPTAPGETRTYIWKIPERSGAGMGDSPCIPWVYYSTVDRVKDLFSGLIGPLIVCRKHYLKVSNPIKKLEFSLLFLVFDENESWYLDDNIKTYSDHPEKVDKANEEFMESNKMHAINGRMFGNLQGLTMHVGNEVDLHSVHFHGHSFQYQHRGIYTSDVFDLFPGTYQTLEMTPKTPGIWLLHCHVTDHIHAGMETTYTVLPNEEIKSG.

The signal sequence occupies residues 1 to 19 (MKIFLLCIFLILCGTSVWA). Plastocyanin-like domains are found at residues 20-200 (KDKH…LIHC), 209-357 (KEKN…VQDC), and 370-554 (NVRH…MKIC). Positions 55, 64, and 67 each coordinate Na(+). Positions 120 and 122 each coordinate Cu(2+). H120 contacts O2. K128 contributes to the Ca(2+) binding site. N-linked (GlcNAc...) asparagine glycosylation is present at N138. Positions 143, 146, and 147 each coordinate Ca(2+). A disulfide bridge links C174 with C200. Residues H180 and H182 each coordinate Cu(2+). H180 provides a ligand contact to O2. A glycan (N-linked (GlcNAc...) asparagine) is linked at N227. A Na(+)-binding site is contributed by S256. Cysteines 276 and 357 form a disulfide. Cu(2+) is bound by residues H295, C338, and H343. The Na(+) site is built by F408, G417, and Y420. Cysteines 530 and 554 form a disulfide. N-linked (GlcNAc...) asparagine glycosylation is found at N556 and N582. The Plastocyanin-like 4 domain maps to 564-712 (RLKNVDKEFY…MKQKYTVSQC (149 aa)). A Na(+)-binding site is contributed by S611. C631 and C712 are joined by a disulfide. Cu(2+) contacts are provided by H650, C693, H698, and M703. The active-site Nucleophile; for glutathione peroxidase activity is the C693. Residue S716 is modified to Phosphoserine. 2 Plastocyanin-like domains span residues 724–894 (GERT…LIVC) and 902–1044 (SNPI…PNEE). N756 is a glycosylation site (N-linked (GlcNAc...) asparagine). Na(+)-binding residues include F761, G770, and Y773. Cysteines 868 and 894 form a disulfide. N920 carries N-linked (GlcNAc...) asparagine glycosylation. S949 lines the Na(+) pocket. Residues H977, H980, H982, H1022, C1023, H1024, H1028, and M1033 each coordinate Cu(2+). Positions 980 and 982 each coordinate O2. Residue H1024 coordinates O2.

This sequence belongs to the multicopper oxidase family. Found in a complex with MPO and LTF; interacts directly with MPO and LTF, which allows Fe(3+) incorporation into LTF, activation of CP ferroxidase activity and protection of CP antioxidant properties by MPO. It depends on Cu(2+) as a cofactor. In terms of tissue distribution, expressed by the liver and secreted in plasma. Also expressed in the hypothalamus, spleen and uterus. No expression in the cortex, heart, intestine or kidney.

The protein localises to the secreted. It carries out the reaction 4 Fe(2+) + O2 + 4 H(+) = 4 Fe(3+) + 2 H2O. The catalysed reaction is 4 Cu(+) + O2 + 4 H(+) = 4 Cu(2+) + 2 H2O. The enzyme catalyses a hydroperoxide + 2 glutathione = an alcohol + glutathione disulfide + H2O. It catalyses the reaction 4 nitric oxide + O2 + 2 H2O = 4 nitrite + 4 H(+). It carries out the reaction 2 glutathione + H2O2 = glutathione disulfide + 2 H2O. Its function is as follows. Multifunctional blue, copper-binding (6-7 atoms per molecule) glycoprotein. It has ferroxidase activity oxidizing Fe(2+) to Fe(3+) without releasing radical oxygen species. It is involved in iron transport across the cell membrane. Copper ions provide a large number of enzymatic activites. Oxidizes highly toxic ferrous ions to the ferric state for further incorporation onto apo-transferrins, catalyzes Cu(+) oxidation and promotes the oxidation of biogenic amines such as norepinephrin and serotonin. Provides Cu(2+) ions for the ascorbate-mediated deaminase degradation of the heparan sulfate chains of GPC1. Has glutathione peroxidase-like activity, can remove both hydrogen peroxide and lipid hydroperoxide in the presence of thiols. Also shows NO-oxidase and NO2 synthase activities that determine endocrine NO homeostasis. The protein is Ceruloplasmin (CP) of Ovis aries (Sheep).